The chain runs to 301 residues: tRNA dimethylallyltransferase (301 aa).

8-15 is an ATP binding site; it reads GPTAVGKT. 10 to 15 is a binding site for substrate; that stretch reads TAVGKT. An interaction with substrate tRNA region spans residues 33 to 36; that stretch reads DSRQ.

The protein belongs to the IPP transferase family. As to quaternary structure, monomer. Mg(2+) serves as cofactor.

It carries out the reaction adenosine(37) in tRNA + dimethylallyl diphosphate = N(6)-dimethylallyladenosine(37) in tRNA + diphosphate. In terms of biological role, catalyzes the transfer of a dimethylallyl group onto the adenine at position 37 in tRNAs that read codons beginning with uridine, leading to the formation of N6-(dimethylallyl)adenosine (i(6)A). This is tRNA dimethylallyltransferase from Thermosipho melanesiensis (strain DSM 12029 / CIP 104789 / BI429).